A 319-amino-acid chain; its full sequence is Homeobox protein Hox-B5a (319 aa).

The interval 114–224 is disordered; that stretch reads SLLSPGSGDT…NTVGSEGQPP (111 aa). The span at 128–155 shows a compositional bias: low complexity; that stretch reads RSSSPRSEQSGSGNLSSTNLSSSTNISS. The Antp-type hexapeptide motif lies at 226-231; that stretch reads IFPWMR. The homeobox DNA-binding region spans 244-303; it reads GKRARTAYTRYQTLELEKEFHFNRYLTRRRRIEIAHALCLTERQIKIWFQNRRMKWKKDN.

This sequence belongs to the Antp homeobox family.

The protein resides in the nucleus. Functionally, sequence-specific transcription factor which is part of a developmental regulatory system that provides cells with specific positional identities on the anterior-posterior axis. The protein is Homeobox protein Hox-B5a (hoxb5a) of Takifugu rubripes (Japanese pufferfish).